A 189-amino-acid polypeptide reads, in one-letter code: Elongation factor P (189 aa).

This sequence belongs to the elongation factor P family.

It localises to the cytoplasm. The protein operates within protein biosynthesis; polypeptide chain elongation. In terms of biological role, involved in peptide bond synthesis. Stimulates efficient translation and peptide-bond synthesis on native or reconstituted 70S ribosomes in vitro. Probably functions indirectly by altering the affinity of the ribosome for aminoacyl-tRNA, thus increasing their reactivity as acceptors for peptidyl transferase. The sequence is that of Elongation factor P from Chloroflexus aurantiacus (strain ATCC 29364 / DSM 637 / Y-400-fl).